We begin with the raw amino-acid sequence, 262 residues long: Adenosylcobinamide-GDP ribazoletransferase (262 aa).

Transmembrane regions (helical) follow at residues leucine 11–isoleucine 31, tyrosine 43–glutamine 63, leucine 66–phenylalanine 86, alanine 121–phenylalanine 141, alanine 146–phenylalanine 166, and isoleucine 199–alanine 219.

Belongs to the CobS family. Requires Mg(2+) as cofactor.

It localises to the cell inner membrane. The enzyme catalyses alpha-ribazole + adenosylcob(III)inamide-GDP = adenosylcob(III)alamin + GMP + H(+). The catalysed reaction is alpha-ribazole 5'-phosphate + adenosylcob(III)inamide-GDP = adenosylcob(III)alamin 5'-phosphate + GMP + H(+). It functions in the pathway cofactor biosynthesis; adenosylcobalamin biosynthesis; adenosylcobalamin from cob(II)yrinate a,c-diamide: step 7/7. Its function is as follows. Joins adenosylcobinamide-GDP and alpha-ribazole to generate adenosylcobalamin (Ado-cobalamin). Also synthesizes adenosylcobalamin 5'-phosphate from adenosylcobinamide-GDP and alpha-ribazole 5'-phosphate. The protein is Adenosylcobinamide-GDP ribazoletransferase of Shewanella denitrificans (strain OS217 / ATCC BAA-1090 / DSM 15013).